We begin with the raw amino-acid sequence, 731 residues long: 1,4-alpha-glucan branching enzyme GlgB (731 aa).

Residue aspartate 411 is the Nucleophile of the active site. The active-site Proton donor is the glutamate 464.

The protein belongs to the glycosyl hydrolase 13 family. GlgB subfamily. As to quaternary structure, monomer.

The catalysed reaction is Transfers a segment of a (1-&gt;4)-alpha-D-glucan chain to a primary hydroxy group in a similar glucan chain.. The protein operates within glycan biosynthesis; glycogen biosynthesis. In terms of biological role, catalyzes the formation of the alpha-1,6-glucosidic linkages in glycogen by scission of a 1,4-alpha-linked oligosaccharide from growing alpha-1,4-glucan chains and the subsequent attachment of the oligosaccharide to the alpha-1,6 position. The polypeptide is 1,4-alpha-glucan branching enzyme GlgB (Mycobacterium ulcerans (strain Agy99)).